Here is a 384-residue protein sequence, read N- to C-terminus: Transcription factor TGA3 (384 aa).

2 disordered regions span residues 36 to 70 and 76 to 95; these read KSDI…NNRV and YNNS…EDRI. A compositionally biased stretch (low complexity) spans 39-55; sequence INNITSNQNNNQSSSTT. Residues 58–68 are compositionally biased toward basic and acidic residues; it reads VDARPEADDNN. Polar residues predominate over residues 76-88; sequence YNNSLEAEPSSNN. One can recognise a bZIP domain in the interval 96-138; the sequence is NDKMKRRLAQNREAARKSRLRKKAHVQQLEESRLKLSQLEQEL. Residues 98-118 form a basic motif region; sequence KMKRRLAQNREAARKSRLRKK. The Nuclear localization signal motif lies at 99-106; the sequence is MKRRLAQN. Residues 117 to 144 adopt a coiled-coil conformation; it reads KKAHVQQLEESRLKLSQLEQELVRARQQ. The tract at residues 124-138 is leucine-zipper; that stretch reads LEESRLKLSQLEQEL. The 213-residue stretch at 167 to 379 folds into the DOG1 domain; the sequence is IAAFEMEYTH…RALSSLWAAR (213 aa). Residues K219, R236, and F249 each contribute to the hexadecanoate site. Residues 267–296 adopt a coiled-coil conformation; that stretch reads DQQLLEVRNLQQSSQQAEEALSQGLDKLQQ.

Belongs to the bZIP family. As to quaternary structure, binds DNA as a dimer. Interacts with NPR3, NPR4 and sumoylated NPR1. Interacts with GRXC7/ROXY1. As to expression, expressed in the whole plant.

It is found in the nucleus. Transcriptional activator that binds specifically to the DNA sequence 5'-TGACG-3'. Recognizes ocs elements like the as-1 motif of the cauliflower mosaic virus 35S promoter. Binding to the as-1-like cis elements mediate auxin- and salicylic acid-inducible transcription. Required to induce the systemic acquired resistance (SAR) via the regulation of pathogenesis-related genes expression. Binding to the as-1 element of PR-1 promoter is salicylic acid-inducible and mediated by sumoylated NPR1. Could also bind to the Hex-motif (5'-TGACGTGG-3') another cis-acting element found in plant histone promoters. This Arabidopsis thaliana (Mouse-ear cress) protein is Transcription factor TGA3.